The chain runs to 179 residues: ATP-dependent protease subunit HslV (179 aa).

Threonine 8 is a catalytic residue. Na(+)-binding residues include serine 164, cysteine 167, and threonine 170.

This sequence belongs to the peptidase T1B family. HslV subfamily. A double ring-shaped homohexamer of HslV is capped on each side by a ring-shaped HslU homohexamer. The assembly of the HslU/HslV complex is dependent on binding of ATP.

It is found in the cytoplasm. The catalysed reaction is ATP-dependent cleavage of peptide bonds with broad specificity.. Its activity is regulated as follows. Allosterically activated by HslU binding. Functionally, protease subunit of a proteasome-like degradation complex believed to be a general protein degrading machinery. The protein is ATP-dependent protease subunit HslV of Staphylococcus carnosus (strain TM300).